Consider the following 544-residue polypeptide: Chaperonin GroEL (544 aa).

ATP contacts are provided by residues Thr-29–Pro-32, Asp-86–Thr-90, Gly-413, Asn-476–Ala-478, and Asp-492.

It belongs to the chaperonin (HSP60) family. In terms of assembly, forms a cylinder of 14 subunits composed of two heptameric rings stacked back-to-back. Interacts with the co-chaperonin GroES.

The protein localises to the cytoplasm. It catalyses the reaction ATP + H2O + a folded polypeptide = ADP + phosphate + an unfolded polypeptide.. Functionally, together with its co-chaperonin GroES, plays an essential role in assisting protein folding. The GroEL-GroES system forms a nano-cage that allows encapsulation of the non-native substrate proteins and provides a physical environment optimized to promote and accelerate protein folding. The sequence is that of Chaperonin GroEL from Bacillus licheniformis (strain ATCC 14580 / DSM 13 / JCM 2505 / CCUG 7422 / NBRC 12200 / NCIMB 9375 / NCTC 10341 / NRRL NRS-1264 / Gibson 46).